The sequence spans 207 residues: MTVANWQVRDFTRILNAGELQGRLEQARTDFGALLAEIVYFHPPGATPEEGDDEYILTGQGLVYVYLSEQTARQCALNRLLPSNSSNFGTVVTAIPPWLMDTQTLNLTLQERCDQGGIVNYYHGSRTNEFFLAIMLSNCFVRFGTDEINGASYGFYARRGNYTEEGEDDDNEIGDEGEAGGAEIRDYQFGDLVNYPIVALGSSRLSA.

In terms of biological role, involved in tumor formation and increases auxin and cytokinin effects in host plants. This chain is Protein 6b (6b), found in Agrobacterium vitis (Rhizobium vitis).